A 358-amino-acid polypeptide reads, in one-letter code: Peptide chain release factor 1 (358 aa).

Gln235 is subject to N5-methylglutamine.

This sequence belongs to the prokaryotic/mitochondrial release factor family. Methylated by PrmC. Methylation increases the termination efficiency of RF1.

Its subcellular location is the cytoplasm. Peptide chain release factor 1 directs the termination of translation in response to the peptide chain termination codons UAG and UAA. The polypeptide is Peptide chain release factor 1 (Neisseria meningitidis serogroup B (strain ATCC BAA-335 / MC58)).